Reading from the N-terminus, the 671-residue chain is MEPIEQQLTELRTTLRHHEYLYHVMDAPEIPDAEYDRLMRELRELEAQRPDLITPDSPTQRVGAAPLTAFNQIRHEVPMLSLDNVFDEESFLAFNKRVQDRLKSTENVIWCCELKLDGLAVSILYENGVLVSAATRGDGTTGEDITSNVRTIRAIPLKLHGDNIPARLEVRGEVFLPQAGFEKINEDARRTGGKVFANPRNAAAGSLRQLDPRITAKRPLTFFCYGVGILEGGELPDTHLGRLLQFKAWGLPVSDRVTLCDSPQAVLDFYRNVEKDRPTLGFDIDGVVIKVNSLALQEQLGFVARAPRWAVAFKFPAQEQMTFVRDVEFQVGRTGAITPVARLEPVQVAGVLVSNATLHNADEIERLGLRIGDKVVIRRAGDVIPQVVNVVLSERPEETRPIVFPTHCPVCGSDVERVEGEAVTRCTGGLICGAQRKESLKHFVSRRAMDVDGMGDKIIDQLVEREYVHTPADLFRLTAGKLTGLDRMGPKSAQNVVNALEKAKATTFARFLYALGIREVGEATAAGLAAYFGTLEALQAATIDELQKVPDVGIVVATHVFNFFAEESNRDVIGQLLAEGVHWPAPVVINVQEIDSPFAGKTVVLTGSLSQMSRDDAKARLVALGAKVAGSVSKKTDLVIAGEAAGSKLAKAQELGINVIDEAEMIRLLGA.

NAD(+)-binding positions include 32-36 (DAEYD), 81-82 (SL), and Glu113. Lys115 (N6-AMP-lysine intermediate) is an active-site residue. Residues Arg136, Glu173, Lys290, and Lys314 each coordinate NAD(+). Zn(2+) is bound by residues Cys408, Cys411, Cys426, and Cys432. The region spanning 593–671 (EIDSPFAGKT…EAEMIRLLGA (79 aa)) is the BRCT domain.

This sequence belongs to the NAD-dependent DNA ligase family. LigA subfamily. Mg(2+) serves as cofactor. Mn(2+) is required as a cofactor.

It catalyses the reaction NAD(+) + (deoxyribonucleotide)n-3'-hydroxyl + 5'-phospho-(deoxyribonucleotide)m = (deoxyribonucleotide)n+m + AMP + beta-nicotinamide D-nucleotide.. DNA ligase that catalyzes the formation of phosphodiester linkages between 5'-phosphoryl and 3'-hydroxyl groups in double-stranded DNA using NAD as a coenzyme and as the energy source for the reaction. It is essential for DNA replication and repair of damaged DNA. The polypeptide is DNA ligase (Salmonella newport (strain SL254)).